Consider the following 122-residue polypeptide: Hexon-interlacing protein (122 aa).

Residues 72–106 (VTELNESIDELQQKMTELEKRLKIMEEKIEEIKLA) adopt a coiled-coil conformation.

The protein belongs to the adenoviridae hexon-interlacing protein family. As to quaternary structure, homotrimer. Interacts with hexon protein; this interaction tethers the hexons together. Self-interacts with adjacent proteins. Interacts with kinesin light chain KLC1; this interaction leads to capsid disruption at the nuclear pore complex during virus entry into host cell.

It is found in the virion. Its subcellular location is the host nucleus. Functionally, structural component of the virion that acts as a cement protein on the capsid exterior and forms triskelion structures consisting of three molecules that stabilize three hexon trimers at the center of each icosahedral facet and fixes the peripentonal hexons. Dispensable for assembly. During virus entry, recruits the anterograde motor kinesin-1 to the capsid docked at the nuclear pore complex thereby subjecting the docked capsid to a pulling force. The resulting tension leads to capsid disruption, dispersion of capsid fragments toward cell periphery and eventually viral DNA entry into the host nucleus. The sequence is that of Hexon-interlacing protein from Tupaiidae (tree shrews).